The sequence spans 457 residues: Cysteine--tRNA ligase (457 aa).

C30 contacts Zn(2+). The short motif at 32–42 is the 'HIGH' region element; it reads PTVYAPAHIGN. The Zn(2+) site is built by C221, H246, and E250. A 'KMSKS' region motif is present at residues 278–282; that stretch reads KMSKS. K281 serves as a coordination point for ATP.

It belongs to the class-I aminoacyl-tRNA synthetase family. Monomer. Zn(2+) serves as cofactor.

The protein localises to the cytoplasm. The catalysed reaction is tRNA(Cys) + L-cysteine + ATP = L-cysteinyl-tRNA(Cys) + AMP + diphosphate. The protein is Cysteine--tRNA ligase of Opitutus terrae (strain DSM 11246 / JCM 15787 / PB90-1).